The primary structure comprises 1539 residues: Lysine-specific demethylase 5D (1539 aa).

The region spanning 14 to 55 (CPVFEPSWAEFQDPLGYIAKIRPIAEKSGICKIRPPADWQPP) is the JmjN domain. One can recognise an ARID domain in the interval 79-169 (TRVKLNYLDQ…IIYPYEMFQS (91 aa)). Positions 192–228 (PHSIPLRQSVQPSKFSSYSRRAKRLQPDPEPTEEDIE) are disordered. A compositionally biased stretch (polar residues) spans 197 to 210 (LRQSVQPSKFSSYS). Glycyl lysine isopeptide (Lys-Gly) (interchain with G-Cter in SUMO2) cross-links involve residues Lys205, Lys229, Lys244, and Lys272. Residues Ser291 and Ser307 each carry the phosphoserine modification. A PHD-type 1 zinc finger spans residues 316 to 362 (ICQVCSRGDEDDKLLFCDGCDDNYHIFCLLPPLPEIPRGIWRCPKCI). Position 430 (Tyr430) interacts with 2-oxoglutarate. The region spanning 458–624 (EYATSGWNLN…AGRQCIEHYR (167 aa)) is the JmjC domain. Residues His504 and Glu506 each contribute to the Fe cation site. Positions 512, 514, and 522 each coordinate 2-oxoglutarate. His592 is a binding site for Fe cation. The C5HC2 zinc-finger motif lies at 697–749 (CIKCKTTCFLSALACYDCPDGLVCLSHINDLCKCSSSRQYLRYRYTLDELPTM). Position 884 is a phosphoserine (Ser884). The PHD-type 2 zinc finger occupies 1174 to 1235 (ICVCGQVPAG…DTKFLCPLCM (62 aa)). Residue Ser1346 is modified to Phosphoserine. Residues 1429–1521 (HQGSRTRSRA…QHKDSGSSAA (93 aa)) are disordered. Basic residues predominate over residues 1432 to 1446 (SRTRSRALERRRRRQ). Over residues 1477–1491 (GREEEHYQEKADREN) the composition is skewed to basic and acidic residues. Polar residues predominate over residues 1494 to 1521 (LTPSTDHSPFLKGNQNSLQHKDSGSSAA).

The protein belongs to the JARID1 histone demethylase family. As to quaternary structure, interacts with PCGF6, MSH5, ZMYND8, AR. The cofactor is L-ascorbate. Requires Fe(2+) as cofactor. Expression is highly down-regulated in metastatic prostate tumors.

It is found in the nucleus. The catalysed reaction is N(6),N(6),N(6)-trimethyl-L-lysyl(4)-[histone H3] + 3 2-oxoglutarate + 3 O2 = L-lysyl(4)-[histone H3] + 3 formaldehyde + 3 succinate + 3 CO2. Functionally, histone demethylase that specifically demethylates 'Lys-4' of histone H3, thereby playing a central role in histone code. Does not demethylate histone H3 'Lys-9', H3 'Lys-27', H3 'Lys-36', H3 'Lys-79' or H4 'Lys-20'. Demethylates trimethylated and dimethylated but not monomethylated H3 'Lys-4'. May play a role in spermatogenesis. Involved in transcriptional repression of diverse metastasis-associated genes; in this function seems to cooperate with ZMYND8. Suppresses prostate cancer cell invasion. Regulates androgen receptor (AR) transcriptional activity by demethylating H3K4me3 active transcription marks. This is Lysine-specific demethylase 5D (KDM5D) from Homo sapiens (Human).